The following is a 203-amino-acid chain: MSRYTGPSWKQSRRLGFSLTGTGKELARRNYVPGQHGPNNRSKLSEYGLQLAEKQKLRFSYGLSEKQFRNLFVQATKVKGGTLGFNFMILLERRLDNVVYRLGLATTRRQARQFVNHGHILVDGKRVDIPSYRVEVGQVISVREKSAKVPAILEAVEATIGRPAFVSFDAEKLEGSLTRLPERDEINPEINEALVVEFYNKML.

The S4 RNA-binding domain maps to 93-156; that stretch reads RRLDNVVYRL…AKVPAILEAV (64 aa).

The protein belongs to the universal ribosomal protein uS4 family. In terms of assembly, part of the 30S ribosomal subunit. Contacts protein S5. The interaction surface between S4 and S5 is involved in control of translational fidelity.

Its function is as follows. One of the primary rRNA binding proteins, it binds directly to 16S rRNA where it nucleates assembly of the body of the 30S subunit. Functionally, with S5 and S12 plays an important role in translational accuracy. The protein is Small ribosomal subunit protein uS4 of Streptococcus thermophilus (strain CNRZ 1066).